We begin with the raw amino-acid sequence, 156 residues long: Histone acetyltransferase HPA2 (156 aa).

Residues 9–156 (ITVRFVTEND…PKILYKRKGY (148 aa)) form the N-acetyltransferase domain. 93–106 (LYVDENSRVKGAGG) serves as a coordination point for acetyl-CoA.

Belongs to the acetyltransferase family. GNAT subfamily. Forms homodimers in the absence, and homotetramers in the presence of acetyl-CoA. Autoacetylates in an intermolecular reaction.

The enzyme catalyses L-lysyl-[protein] + acetyl-CoA = N(6)-acetyl-L-lysyl-[protein] + CoA + H(+). N-acetyltransferase that acetylates histone H3 at 'Lys-14' and histone H4 at 'Lys-5' and 'Lys-12'. Also acetylates polyamines like putrescine, spermidine and spermine, and certain other small basic proteins like nuclear HMG proteins. The protein is Histone acetyltransferase HPA2 of Saccharomyces cerevisiae (strain ATCC 204508 / S288c) (Baker's yeast).